The sequence spans 52 residues: Large ribosomal subunit protein bL33 (52 aa).

The protein belongs to the bacterial ribosomal protein bL33 family.

The protein is Large ribosomal subunit protein bL33 of Helicobacter pylori (strain HPAG1).